A 254-amino-acid polypeptide reads, in one-letter code: Putative ankyrin-containing lipoprotein Lxx09580 (254 aa).

Residues Met1 to Gly22 form the signal peptide. Cys23 is lipidated: N-palmitoyl cysteine. A lipid anchor (S-diacylglycerol cysteine) is attached at Cys23. ANK repeat units follow at residues Ala56–Asp85, Gly89–Ala118, Ile122–Ala151, Phe155–His184, and Pro188–Ile222.

Its subcellular location is the cell membrane. This chain is Putative ankyrin-containing lipoprotein Lxx09580, found in Leifsonia xyli subsp. xyli (strain CTCB07).